The sequence spans 456 residues: tRNA modification GTPase MnmE (456 aa).

3 residues coordinate (6S)-5-formyl-5,6,7,8-tetrahydrofolate: arginine 24, glutamate 81, and lysine 120. One can recognise a TrmE-type G domain in the interval 216–379 (GMTVVIAGRP…LRDHLKGCMG (164 aa)). Asparagine 226 serves as a coordination point for K(+). GTP contacts are provided by residues 226–231 (NAGKSS), 245–251 (TDIAGTT), 270–273 (DTAG), and 335–338 (NKAD). Serine 230 is a binding site for Mg(2+). K(+) is bound by residues threonine 245, isoleucine 247, and threonine 250. Mg(2+) is bound at residue threonine 251. Lysine 456 contributes to the (6S)-5-formyl-5,6,7,8-tetrahydrofolate binding site.

Belongs to the TRAFAC class TrmE-Era-EngA-EngB-Septin-like GTPase superfamily. TrmE GTPase family. In terms of assembly, homodimer. Heterotetramer of two MnmE and two MnmG subunits. The cofactor is K(+).

The protein resides in the cytoplasm. In terms of biological role, exhibits a very high intrinsic GTPase hydrolysis rate. Involved in the addition of a carboxymethylaminomethyl (cmnm) group at the wobble position (U34) of certain tRNAs, forming tRNA-cmnm(5)s(2)U34. The protein is tRNA modification GTPase MnmE of Pseudomonas putida (strain ATCC 47054 / DSM 6125 / CFBP 8728 / NCIMB 11950 / KT2440).